Reading from the N-terminus, the 106-residue chain is Large ribosomal subunit protein uL24 (106 aa).

The protein belongs to the universal ribosomal protein uL24 family. As to quaternary structure, part of the 50S ribosomal subunit.

In terms of biological role, one of two assembly initiator proteins, it binds directly to the 5'-end of the 23S rRNA, where it nucleates assembly of the 50S subunit. Its function is as follows. One of the proteins that surrounds the polypeptide exit tunnel on the outside of the subunit. This is Large ribosomal subunit protein uL24 from Bordetella avium (strain 197N).